The following is a 72-amino-acid chain: Protein SlyX homolog (72 aa).

Residues 53 to 72 (KDISPSNIRREEEETPPPHY) form a disordered region.

This sequence belongs to the SlyX family.

This chain is Protein SlyX homolog, found in Marinobacter nauticus (strain ATCC 700491 / DSM 11845 / VT8) (Marinobacter aquaeolei).